Here is a 129-residue protein sequence, read N- to C-terminus: MAKEATRVRRRERKNISSGVAHVNSTFNNTMITITDAQGNAIAWSSAGAKGFKGSRKSTPFAAQIAAEDCAKKAQEHGMKSLEVEVCGPGSGRESALRALQAAGFMITSIRDVTPIPHNGCRPRKKRRV.

This sequence belongs to the universal ribosomal protein uS11 family. Part of the 30S ribosomal subunit. Interacts with proteins S7 and S18. Binds to IF-3.

Located on the platform of the 30S subunit, it bridges several disparate RNA helices of the 16S rRNA. Forms part of the Shine-Dalgarno cleft in the 70S ribosome. The chain is Small ribosomal subunit protein uS11 from Allorhizobium ampelinum (strain ATCC BAA-846 / DSM 112012 / S4) (Agrobacterium vitis (strain S4)).